Reading from the N-terminus, the 271-residue chain is MVLTAVLLLLAACAGPAQGLGSFVHCEPCDEKALSMCPPSPLGCELVKEPGCGCCMTCALAEGQSCGVYTERCAQGLRCLPRQDEEKPLHALLHGRGVCLNEKSYREQAKIERDSREHEEPTTSEMAEETYSPKIFRPKHTRISELKAEAVKKDRRKKLTQSKFVGGAENTAHPRVILAPEMRQESEQGPCRRHMEASLQELKASPRMVPRAVYLPNCDRKGFYKRKQCKPSRGRKRGICWCVDKYGMKLPGMEYVDGDFQCHSFDSSNVE.

Residues 1–19 (MVLTAVLLLLAACAGPAQG) form the signal peptide. The IGFBP N-terminal domain occupies 22-102 (SFVHCEPCDE…LHGRGVCLNE (81 aa)). 6 disulfide bridges follow: Cys-26–Cys-52, Cys-29–Cys-54, Cys-37–Cys-55, Cys-44–Cys-58, Cys-66–Cys-79, and Cys-73–Cys-99. Residues 109-121 (AKIERDSREHEEP) show a composition bias toward basic and acidic residues. Positions 109-129 (AKIERDSREHEEPTTSEMAEE) are disordered. At Ser-115 the chain carries Phosphoserine. Residues 188 to 262 (QGPCRRHMEA…MEYVDGDFQC (75 aa)) form the Thyroglobulin type-1 domain. 3 cysteine pairs are disulfide-bonded: Cys-191–Cys-218, Cys-229–Cys-240, and Cys-242–Cys-262.

In terms of assembly, interacts with IGF1; this interaction enhances the growth stimulatory effects of IGF1 on fibroblasts. Interacts with CAV1; this interaction allows trafficking of IGFBP5 from the plasma membrane to the nucleus. Interacts with NCL; this interaction is necessary for IGFBP5 localization to the nucleus.

The protein resides in the secreted. It localises to the cytoplasm. The protein localises to the nucleus. Functionally, multifunctional protein that plays a critical role in regulating the availability of IGFs to their receptors and thereby regulates IGF-mediated cellular processes including proliferation, differentiation, and apoptosis in a cell-type specific manner. Increases the cell proliferation of osteoblasts, intestinal smooth muscle cells and neuroblastoma cells. Enhances adhesion and survival of epithelial cells but decreases adhesion of mesenchymal cells. Once secreted, acts as a major mediator of mTORC1-dependent feedback inhibition of IGF1 signaling. Also plays a role in the induction of extracellular matrix (ECM) production and deposition independently of its nuclear translocation and binding to IGFs. Acts itself as a growth factor that can act independently of IGFs to regulate bone formation. Acts as a ligand for the ROR1 receptor which triggers formation of ROR1/HER2 heterodimer to enhance CREB oncogenic signaling. In Sus scrofa (Pig), this protein is Insulin-like growth factor-binding protein 5 (IGFBP5).